Here is a 269-residue protein sequence, read N- to C-terminus: MSIKLVAVDIDGTLLTDDRRITDDVFQAVQEAKAQGVHVVIATGRPIAGVISLLEQLELNHKGNHVITFNGGLVQDAETGEEIVKELMTYDDYLETEFLSRKLGVHMHAITKEGIYTANRNIGKYTVHESTLVNMPIFYRTPEEMTNKEIIKMMMIDEPDLLDAAIKQIPQHFFDKYTIVKSTPFYLEFMPKTVSKGNAIKHLAKKLGLDMSQTMAIGDAENDRAMLEVVANPVVMENGVPELKKIAKYITKSNNDSGVAHAIRKWVLN.

Catalysis depends on Asp-9, which acts as the Nucleophile. Asp-9 lines the Mg(2+) pocket. Ile-10 provides a ligand contact to phosphate. Residue Asp-11 participates in Mg(2+) binding. Phosphate contacts are provided by residues 43 to 44 (TG) and Lys-196. A Mg(2+)-binding site is contributed by Asp-219. Asn-222 lines the phosphate pocket.

The cofactor is Mg(2+).

This Streptococcus pyogenes serotype M6 (strain ATCC BAA-946 / MGAS10394) protein is Putative phosphatase M6_Spy0533.